Here is a 160-residue protein sequence, read N- to C-terminus: MPQITLVFISLSGNTLSFVKRLSLYLADNYDYHVKQINIKDLKHETFPVKEEFVAILPTYLEGGNGVDSGEVEILTTPLGEFIAAHGNAQRCLGIIGSGNKNFNHQYCLTAKQYAKRFGFPLLGDFELRGTPDDISRLAQLIMEASSRHSSNDTQTLPNS.

Belongs to the NrdI family.

This Streptococcus pyogenes serotype M6 (strain ATCC BAA-946 / MGAS10394) protein is Putative NrdI-like protein.